We begin with the raw amino-acid sequence, 507 residues long: Transmembrane protein 184 homolog DDB_G0276041 (507 aa).

The next 7 helical transmembrane spans lie at 13–33 (IVMLSIGSFFALGSIIIAVIL), 50–70 (IVRIIMIAPIYAIHSLLSLFF), 88–108 (AYVLYCFFKLLICFLGGEEAL), 141–161 (LGLVLQYAIIKPTLAIVAAIL), 179–199 (LWITVINNISVLIALYFLVMF), 222–242 (VVFFLFWQTVVITVLIWFDAL), and 260–280 (FLVCIEMFITSIAMGICFSYS). Residues Asn-360, Asn-375, Asn-470, Asn-473, Asn-477, and Asn-498 are each glycosylated (N-linked (GlcNAc...) asparagine). The disordered stretch occupies residues 448–500 (NGASNNNNNNNNNNNNINNNNNNNSNNSNNNSNSQFESIDINSNSVNSNKNQS). The span at 451–500 (SNNNNNNNNNNNNINNNNNNNSNNSNNNSNSQFESIDINSNSVNSNKNQS) shows a compositional bias: low complexity.

The protein belongs to the TMEM184 family.

The protein resides in the cell membrane. Probable transporter. The sequence is that of Transmembrane protein 184 homolog DDB_G0276041 (tmem184B) from Dictyostelium discoideum (Social amoeba).